Consider the following 75-residue polypeptide: MARYFRRRKFCRFTAEGVVEIDYKDIATLKNYITESGKIVPSRITGTRAKYQRQLARAIKRARYLSLLPYTDRHQ.

This sequence belongs to the bacterial ribosomal protein bS18 family. Part of the 30S ribosomal subunit. Forms a tight heterodimer with protein bS6.

Its function is as follows. Binds as a heterodimer with protein bS6 to the central domain of the 16S rRNA, where it helps stabilize the platform of the 30S subunit. The protein is Small ribosomal subunit protein bS18 of Pectobacterium atrosepticum (strain SCRI 1043 / ATCC BAA-672) (Erwinia carotovora subsp. atroseptica).